The following is a 233-amino-acid chain: Nickel import system ATP-binding protein NikE (233 aa).

Residues 2 to 228 enclose the ABC transporter domain; that stretch reads IELKHVTFGY…DRHPYTKELV (227 aa). Residue 35-42 coordinates ATP; that stretch reads GESGCGKS.

It belongs to the ABC transporter superfamily. As to quaternary structure, the complex is composed of two ATP-binding proteins (NikD and NikE), two transmembrane proteins (NikB and NikC) and a solute-binding protein (NikA).

It localises to the cell membrane. It catalyses the reaction Ni(2+)(out) + ATP + H2O = Ni(2+)(in) + ADP + phosphate + H(+). In terms of biological role, part of the ABC transporter complex NikABCDE (Opp2) involved in nickel import. Probably responsible for energy coupling to the transport system. The sequence is that of Nickel import system ATP-binding protein NikE from Staphylococcus aureus (strain Mu50 / ATCC 700699).